The chain runs to 421 residues: Proton/sodium-glutamate symport protein (421 aa).

Over 1–3 (MRK) the chain is Cytoplasmic. A helical membrane pass occupies residues 4 to 24 (IGLAWQIFIGLILGIIVGAIF). Residues 25 to 43 (YGNPKVAAYLQPIGDIFLR) lie on the Extracellular side of the membrane. The chain crosses the membrane as a helical span at residues 44 to 64 (LIKMIVIPIVISSLVVGVASV). Residues 65–77 (GDLKKLGKLGGKT) lie on the Cytoplasmic side of the membrane. A helical membrane pass occupies residues 78–98 (IIYFEIITTIAIVVGLLAANI). Residues 99–148 (FQPGAGVNMKSLEKTDIQSYVDTTNEVQHHSMVETFVNIVPKNIFESLST) are Extracellular-facing. A helical transmembrane segment spans residues 149–169 (GDMLPIIFFSVMFGLGVAAIG). The Cytoplasmic segment spans residues 170 to 198 (EKGKPVLQFFQGTAEAMFYVTNQIMKFAP). A helical transmembrane segment spans residues 199–219 (FGVFALIGVTVSKFGVESLIP). The Extracellular portion of the chain corresponds to 220–222 (LSK). A helical transmembrane segment spans residues 223-243 (LVIVVYATMLFFIFAVLGGVA). A topological domain (cytoplasmic) is located at residue Lys-244. A helical transmembrane segment spans residues 245–265 (LFGINIFHIIKILKDELILAY). Residues 266 to 306 (STASSETVLPRIMDKMEKFGCPKAITSFVIPTGYSFNLDGS) lie on the Extracellular side of the membrane. A helical transmembrane segment spans residues 307–327 (TLYQALAAIFIAQLYGIDMSV). Residues 328–330 (SQQ) lie on the Cytoplasmic side of the membrane. The next 2 helical transmembrane spans lie at 331 to 351 (ISLLLVLMVTSKGIAGVPGVS) and 352 to 372 (FVVLLATLGTVGIPVEGLAFI). Residues 373–421 (AGIDRILDMARTAVNVIGNSLAAIIMSKWEGQYNEEKGKQYLAELQQSA) are Cytoplasmic-facing.

The protein belongs to the dicarboxylate/amino acid:cation symporter (DAACS) (TC 2.A.23) family. In terms of assembly, homotrimer.

Its subcellular location is the cell membrane. Its function is as follows. This carrier protein is part of the Na(+)-dependent, binding-protein-independent glutamate-aspartate transport system. The sequence is that of Proton/sodium-glutamate symport protein (gltT) from Bacillus caldotenax.